The following is a 333-amino-acid chain: 6-phosphogluconolactonase (333 aa).

Belongs to the cycloisomerase 2 family.

It catalyses the reaction 6-phospho-D-glucono-1,5-lactone + H2O = 6-phospho-D-gluconate + H(+). It functions in the pathway carbohydrate degradation; pentose phosphate pathway; D-ribulose 5-phosphate from D-glucose 6-phosphate (oxidative stage): step 2/3. Functionally, catalyzes the hydrolysis of 6-phosphogluconolactone to 6-phosphogluconate. The sequence is that of 6-phosphogluconolactonase from Cronobacter sakazakii (strain ATCC BAA-894) (Enterobacter sakazakii).